Here is a 1125-residue protein sequence, read N- to C-terminus: Probable phospholipid-transporting ATPase IIB (1125 aa).

The Cytoplasmic portion of the chain corresponds to 1–131 (MADGIPLNPV…IKNQKYNIVT (131 aa)). Residues 132–152 (FVPGVLYQQFKFFLNLYFLVV) form a helical membrane-spanning segment. Residues 153 to 161 (ACSQFVPSL) are Extracellular-facing. A helical transmembrane segment spans residues 162-182 (KIGYLYTYWAPLGFVLAVTMV). The Cytoplasmic segment spans residues 183-369 (REAVDEVRRC…LDLELNRLTK (187 aa)). A helical membrane pass occupies residues 370–390 (ALFLAQVVLSVVMVALQGFLG). At 391-395 (PWFRN) the chain is on the extracellular side. Residues 396-415 (LFRFVVLFSYIIPISLRVNL) traverse the membrane as a helical segment. Topologically, residues 416-928 (DMGKSAYGWM…ALGQFVMHRG (513 aa)) are cytoplasmic. The active-site 4-aspartylphosphate intermediate is the Asp455. Asp455, Lys456, and Thr457 together coordinate ATP. Residue Asp455 participates in Mg(2+) binding. Thr457 lines the Mg(2+) pocket. Over residues 500–511 (QSNGSSASSTPS) the composition is skewed to low complexity. Disordered regions lie at residues 500 to 525 (QSNG…RKSV) and 552 to 574 (GANA…RTYQ). The segment covering 558 to 567 (ESTEADQDFS) has biased composition (acidic residues). Glu580, Phe622, Lys627, Lys646, Arg675, Thr676, Thr755, Gly756, Asp757, Arg837, and Lys843 together coordinate ATP. Asp863 is a Mg(2+) binding site. Residues Asn866 and Asp867 each coordinate ATP. Asp867 serves as a coordination point for Mg(2+). The helical transmembrane segment at 929–949 (MIISTMQAVFSSIFYFASVPL) threads the bilayer. Over 950-951 (YQ) the chain is Extracellular. A helical membrane pass occupies residues 952–972 (GFLMVGYATIYTMFPVFSLVL). Residues 973–1001 (DQDVKPEMALLYPELYKDLTKGRSLSFKT) are Cytoplasmic-facing. The helical transmembrane segment at 1002 to 1022 (FLIWVLISIYQGGILMYGALV) threads the bilayer. Residues 1023 to 1030 (LFDQEFVH) lie on the Extracellular side of the membrane. Residues 1031–1051 (VVAISFTALILTELLMVALTI) form a helical membrane-spanning segment. Topologically, residues 1052-1055 (RTWH) are cytoplasmic. The chain crosses the membrane as a helical span at residues 1056–1076 (WLMVVAQLISLACYLASLAFL). At 1077 to 1088 (NEYFDLSFITTR) the chain is on the extracellular side. A helical transmembrane segment spans residues 1089-1109 (VFLWKVCVITLVSCLPLYIIK). The Cytoplasmic segment spans residues 1110–1125 (YLKRKFSPPSYSKLSS).

It belongs to the cation transport ATPase (P-type) (TC 3.A.3) family. Type IV subfamily. Requires Mg(2+) as cofactor.

It localises to the golgi apparatus. Its subcellular location is the trans-Golgi network membrane. The enzyme catalyses ATP + H2O + phospholipidSide 1 = ADP + phosphate + phospholipidSide 2.. The sequence is that of Probable phospholipid-transporting ATPase IIB (atp9b) from Danio rerio (Zebrafish).